The chain runs to 757 residues: Polyribonucleotide nucleotidyltransferase (757 aa).

Residues Asp-525 and Asp-531 each coordinate Mg(2+). Positions Pro-591–Val-650 constitute a KH domain. Residues Gly-662–Val-734 form the S1 motif domain. The disordered stretch occupies residues Glu-737–Gly-757.

It belongs to the polyribonucleotide nucleotidyltransferase family. It depends on Mg(2+) as a cofactor.

It is found in the cytoplasm. The enzyme catalyses RNA(n+1) + phosphate = RNA(n) + a ribonucleoside 5'-diphosphate. Involved in mRNA degradation. Catalyzes the phosphorolysis of single-stranded polyribonucleotides processively in the 3'- to 5'-direction. This chain is Polyribonucleotide nucleotidyltransferase, found in Clavibacter michiganensis subsp. michiganensis (strain NCPPB 382).